Here is a 217-residue protein sequence, read N- to C-terminus: N-(5'-phosphoribosyl)anthranilate isomerase (217 aa).

It belongs to the TrpF family.

The catalysed reaction is N-(5-phospho-beta-D-ribosyl)anthranilate = 1-(2-carboxyphenylamino)-1-deoxy-D-ribulose 5-phosphate. Its pathway is amino-acid biosynthesis; L-tryptophan biosynthesis; L-tryptophan from chorismate: step 3/5. The polypeptide is N-(5'-phosphoribosyl)anthranilate isomerase (Acaryochloris marina (strain MBIC 11017)).